The chain runs to 1016 residues: Calmodulin-binding transcription activator 4 (1016 aa).

The segment at residues 38–164 (ISTLYQEAHS…YRDVSEREEG (127 aa)) is a DNA-binding region (CG-1). Residues 324-343 (KNGSGPSGGTGGSGDQGSES) form a disordered region. Residues 328-338 (GPSGGTGGSGD) are compositionally biased toward gly residues. ANK repeat units follow at residues 647–676 (QEQG…NVDF), 680–709 (KGWS…SAGA), and 719–748 (NGKT…TNHL). The segment at 753-786 (LEETENSKDTAQVQTEKTLNSISEQSPSGNEDQV) is disordered. Over residues 761–785 (DTAQVQTEKTLNSISEQSPSGNEDQ) the composition is skewed to polar residues. 3 consecutive IQ domains span residues 798-827 (AAQA…LVAC), 855-884 (YNSA…KVVK), and 878-907 (LRQK…AVRI). The interval 903–925 (WAVRILDKVVLRWRRKGVGLRGF) is calmodulin-binding. Residues Ser935 and Ser962 each carry the phosphoserine modification.

This sequence belongs to the CAMTA family. Expressed in roots, stems, leaves, flowers and siliques.

It localises to the nucleus. In terms of biological role, transcription activator that binds to the DNA consensus sequence 5'-[ACG]CGCG[GTC]-3'. Regulates transcriptional activity in response to calcium signals. Binds calmodulin in a calcium-dependent manner. Involved together with CAMTA2 and CAMTA3 in the positive regulation of a general stress response. The polypeptide is Calmodulin-binding transcription activator 4 (Arabidopsis thaliana (Mouse-ear cress)).